The sequence spans 115 residues: Holo-[acyl-carrier-protein] synthase (115 aa).

Mg(2+) contacts are provided by Asp-6 and Glu-51.

It belongs to the P-Pant transferase superfamily. AcpS family. It depends on Mg(2+) as a cofactor.

It localises to the cytoplasm. It catalyses the reaction apo-[ACP] + CoA = holo-[ACP] + adenosine 3',5'-bisphosphate + H(+). Functionally, transfers the 4'-phosphopantetheine moiety from coenzyme A to a Ser of acyl-carrier-protein. The sequence is that of Holo-[acyl-carrier-protein] synthase from Campylobacter jejuni (strain RM1221).